We begin with the raw amino-acid sequence, 1241 residues long: ATP-dependent helicase/nuclease subunit A (1241 aa).

The 474-residue stretch at 12–485 folds into the UvrD-like helicase ATP-binding domain; it reads SQWTDDQWKA…IDLAKNFRSR (474 aa). 33 to 40 provides a ligand contact to ATP; sequence AAAGSGKT. One can recognise a UvrD-like helicase C-terminal domain in the interval 505-805; the sequence is GEIDYDADAE…RIMTIHKSKG (301 aa).

It belongs to the helicase family. AddA subfamily. Heterodimer of AddA and AddB/RexB. The cofactor is Mg(2+).

The catalysed reaction is Couples ATP hydrolysis with the unwinding of duplex DNA by translocating in the 3'-5' direction.. It carries out the reaction ATP + H2O = ADP + phosphate + H(+). Functionally, the heterodimer acts as both an ATP-dependent DNA helicase and an ATP-dependent, dual-direction single-stranded exonuclease. Recognizes the chi site generating a DNA molecule suitable for the initiation of homologous recombination. The AddA nuclease domain is required for chi fragment generation; this subunit has the helicase and 3' -&gt; 5' nuclease activities. This chain is ATP-dependent helicase/nuclease subunit A, found in Bacillus mycoides (strain KBAB4) (Bacillus weihenstephanensis).